Reading from the N-terminus, the 63-residue chain is Cecropin-A1 (63 aa).

The N-terminal stretch at 1-23 (MNFYNIFVFVALILAITIGQSEA) is a signal peptide. An Arginine amide modification is found at Arg62.

It belongs to the cecropin family.

The protein localises to the secreted. Cecropins have lytic and antibacterial activity against several Gram-positive and Gram-negative bacteria. This chain is Cecropin-A1 (CecA1), found in Drosophila sechellia (Fruit fly).